The primary structure comprises 867 residues: Leucine--tRNA ligase (867 aa).

Positions 43-53 (PYPSGRLHMGH) match the 'HIGH' region motif. The 'KMSKS' region motif lies at 627–631 (KMSKS). Residue lysine 630 coordinates ATP.

Belongs to the class-I aminoacyl-tRNA synthetase family.

It is found in the cytoplasm. It catalyses the reaction tRNA(Leu) + L-leucine + ATP = L-leucyl-tRNA(Leu) + AMP + diphosphate. This Phenylobacterium zucineum (strain HLK1) protein is Leucine--tRNA ligase.